A 707-amino-acid chain; its full sequence is Polyribonucleotide nucleotidyltransferase (707 aa).

Mg(2+)-binding residues include Asp-488 and Asp-494. The region spanning 554–613 (PRLFTMKINQDKIREVIGKGGETIRSITAETGTEINIAEDGTITIAATTQEAGDAAKKRI) is the KH domain. The region spanning 623-693 (GKVYEGTVVK…DRGRVRLSIK (71 aa)) is the S1 motif domain.

This sequence belongs to the polyribonucleotide nucleotidyltransferase family. Requires Mg(2+) as cofactor.

It localises to the cytoplasm. It catalyses the reaction RNA(n+1) + phosphate = RNA(n) + a ribonucleoside 5'-diphosphate. Its function is as follows. Involved in mRNA degradation. Catalyzes the phosphorolysis of single-stranded polyribonucleotides processively in the 3'- to 5'-direction. The chain is Polyribonucleotide nucleotidyltransferase from Neisseria meningitidis serogroup B (strain ATCC BAA-335 / MC58).